A 247-amino-acid chain; its full sequence is MSKEPNFPPSEKLEKVEAPADLRSIAGFEWWRRTFEYKTGLGLTPEAKVQYEKDYQYVLQREQCKQCYDNRDWLLKYSPTVVFMTQQIAKLNRRRTGDDSLHFDTSKIICDVCPEWKSGGFNPSLGILLCQNRIRDKWQMEDTLSHELVHQFDELKFEVDWMNLKHHACSEVRASNLSGECRLSQEFFRRGFNGSFGRGHQECVRRRAVLSVMGNPKCKDKAEAEQIVDEVWQSCFNDTRPFEEIYR.

A divalent metal cation is bound at residue histidine 146. Glutamate 147 is an active-site residue. Histidine 150 lines the a divalent metal cation pocket.

It belongs to the peptidase M76 family.

It localises to the mitochondrion inner membrane. In terms of biological role, has a dual role in the assembly of mitochondrial ATPase. Acts as a protease that removes N-terminal residues of mitochondrial ATPase CF(0) subunit 6 at the intermembrane space side. Also involved in the correct assembly of the membrane-embedded ATPase CF(0) particle, probably mediating association of subunit 6 with the subunit 9 ring. This Eremothecium gossypii (strain ATCC 10895 / CBS 109.51 / FGSC 9923 / NRRL Y-1056) (Yeast) protein is Mitochondrial inner membrane protease ATP23 (ATP23).